A 409-amino-acid chain; its full sequence is Arginine deiminase (409 aa).

The active-site Amidino-cysteine intermediate is the cysteine 399.

It belongs to the arginine deiminase family.

The protein localises to the cytoplasm. It catalyses the reaction L-arginine + H2O = L-citrulline + NH4(+). It functions in the pathway amino-acid degradation; L-arginine degradation via ADI pathway; carbamoyl phosphate from L-arginine: step 1/2. This chain is Arginine deiminase, found in Streptococcus gordonii (strain Challis / ATCC 35105 / BCRC 15272 / CH1 / DL1 / V288).